A 569-amino-acid polypeptide reads, in one-letter code: Santalene synthase (569 aa).

The (2E)-geranyl diphosphate site is built by arginine 284, aspartate 321, aspartate 325, and arginine 460. The Mg(2+) site is built by aspartate 321 and aspartate 325. The DDXXD motif motif lies at 321 to 325; that stretch reads DDAYD. Asparagine 463, threonine 467, and glutamate 471 together coordinate Mg(2+).

Belongs to the terpene synthase family. Tpsb subfamily. Mg(2+) serves as cofactor. Requires Mn(2+) as cofactor.

The enzyme catalyses (2E,6E)-farnesyl diphosphate = (1S,5S,6R)-alpha-bergamotene + diphosphate. The catalysed reaction is (2E,6E)-farnesyl diphosphate = (+)-alpha-santalene + diphosphate. It carries out the reaction (2E,6E)-farnesyl diphosphate = (-)-beta-santalene + diphosphate. In terms of biological role, catalyzes a mixture of sesquiterpenoids from (2E,6E)-farnesyl diphosphate in fragrance biosynthesis. Catalyzes the formation of alpha-santalene, beta-santalene, epi-beta-santalene and exo-alpha-bergamotene, as well as traces of alpha-farnesene and beta-farnesene. The sequence is that of Santalene synthase from Santalum austrocaledonicum (Sandalwood).